A 259-amino-acid polypeptide reads, in one-letter code: Ferritin-3, chloroplastic (259 aa).

Residues 1-49 constitute a chloroplast transit peptide; sequence MLLKAASTFSLLNIHGEKKDISPLFSSSSSISSPVSSGKSGNLSFPLRA. The interval 50–88 is extension peptide (EP); that stretch reads SKSSTTTTSTLSGVVFEPFEEVKKEMDLVPSGQQLSLAR. The 154-residue stretch at 89–242 folds into the Ferritin-like diiron domain; sequence HLYSPECEAA…EYVSQLRRLG (154 aa). Residues Glu106, Glu141, His144, Glu190, and Gln224 each contribute to the Fe cation site.

The protein belongs to the ferritin family. In terms of assembly, oligomer of 24 subunits. There are two types of subunits: L (light) chain and H (heavy) chain. The major chain can be light or heavy, depending on the species and tissue type. The functional molecule forms a roughly spherical shell with a diameter of 12 nm and contains a central cavity into which the insoluble mineral iron core is deposited.

The protein resides in the plastid. It localises to the chloroplast. It catalyses the reaction 4 Fe(2+) + O2 + 4 H(+) = 4 Fe(3+) + 2 H2O. Its function is as follows. Stores iron in a soluble, non-toxic, readily available form. Important for iron homeostasis. Has ferroxidase activity. Iron is taken up in the ferrous form and deposited as ferric hydroxides after oxidation. The protein is Ferritin-3, chloroplastic (FER3) of Arabidopsis thaliana (Mouse-ear cress).